Consider the following 677-residue polypeptide: Methionine--tRNA ligase (677 aa).

The short motif at 15 to 25 (PYANGSIHLGH) is the 'HIGH' region element. Residues Cys-146, Cys-149, Cys-159, and Cys-162 each coordinate Zn(2+). The 'KMSKS' region signature appears at 333-337 (KMSKS). An ATP-binding site is contributed by Lys-336. In terms of domain architecture, tRNA-binding spans 575 to 677 (DFAKVDLRVA…AGAKPGHQVK (103 aa)).

The protein belongs to the class-I aminoacyl-tRNA synthetase family. MetG type 1 subfamily. Homodimer. Zn(2+) is required as a cofactor.

It is found in the cytoplasm. It carries out the reaction tRNA(Met) + L-methionine + ATP = L-methionyl-tRNA(Met) + AMP + diphosphate. In terms of biological role, is required not only for elongation of protein synthesis but also for the initiation of all mRNA translation through initiator tRNA(fMet) aminoacylation. This chain is Methionine--tRNA ligase, found in Escherichia coli O157:H7.